We begin with the raw amino-acid sequence, 393 residues long: MQLEDFMRYPDLVCQAAQLPRYTWNGRRSLEVKRNLAKRIIFWLGAVNLVYHNIGCVMYGYFGDGRTKDPIAYLAELASVASMLGFTIVGTLNLWKMLSLKTHFENLLNEFEELFQLIKHRAYRIHHYQEKYTRHIRNTFIFHTSAVVYYNSLPILLMIREHFSNSQQLGYRIQSNTWYPWQVQGSIPGFFAAVACQIFSCQTNMCVNMFIQFLINFFGIQLEIHFDGLARQLETIDARNPHAKDQLKYLIVYHTKLLNLADRVNRSFNFTFLISLSVSMISNCFLAFSMTMFDFGTSLKHLLGLLLFITYNFSMCRSGTHLILTSGKVLPAAFYNNWYEGDLVYRRMLLILMMRATKPYMWKTYKLAPVSITTYMATLKFSYQMFTCVRSLK.

The Cytoplasmic portion of the chain corresponds to 1–39 (MQLEDFMRYPDLVCQAAQLPRYTWNGRRSLEVKRNLAKR). The chain crosses the membrane as a helical span at residues 40 to 60 (IIFWLGAVNLVYHNIGCVMYG). At 61–69 (YFGDGRTKD) the chain is on the extracellular side. A helical transmembrane segment spans residues 70-90 (PIAYLAELASVASMLGFTIVG). The Cytoplasmic portion of the chain corresponds to 91 to 138 (TLNLWKMLSLKTHFENLLNEFEELFQLIKHRAYRIHHYQEKYTRHIRN). The chain crosses the membrane as a helical span at residues 139-159 (TFIFHTSAVVYYNSLPILLMI). Residues 160-208 (REHFSNSQQLGYRIQSNTWYPWQVQGSIPGFFAAVACQIFSCQTNMCVN) are Extracellular-facing. The chain crosses the membrane as a helical span at residues 209 to 229 (MFIQFLINFFGIQLEIHFDGL). The Cytoplasmic segment spans residues 230 to 269 (ARQLETIDARNPHAKDQLKYLIVYHTKLLNLADRVNRSFN). A helical membrane pass occupies residues 270-290 (FTFLISLSVSMISNCFLAFSM). Residues 291 to 305 (TMFDFGTSLKHLLGL) are Extracellular-facing. A helical membrane pass occupies residues 306-326 (LLFITYNFSMCRSGTHLILTS). The Cytoplasmic segment spans residues 327-365 (GKVLPAAFYNNWYEGDLVYRRMLLILMMRATKPYMWKTY). The helical transmembrane segment at 366–386 (KLAPVSITTYMATLKFSYQMF) threads the bilayer. The Extracellular portion of the chain corresponds to 387–393 (TCVRSLK).

It belongs to the insect chemoreceptor superfamily. Heteromeric odorant receptor channel (TC 1.A.69) family. Or49a subfamily. As to quaternary structure, interacts with Orco. Complexes exist early in the endomembrane system in olfactory sensory neurons (OSNs), coupling these complexes to the conserved ciliary trafficking pathway. In terms of tissue distribution, expressed in olfactory sensory neurons in the antenna.

Its subcellular location is the cell membrane. In terms of biological role, odorant receptor which mediates acceptance or avoidance behavior, depending on its substrates. The odorant receptor repertoire encodes a large collection of odor stimuli that vary widely in identity, intensity, and duration. May form a complex with Orco to form odorant-sensing units, providing sensitive and prolonged odorant signaling and calcium permeability. The polypeptide is Putative odorant receptor 69a, isoform B (Or69a) (Drosophila melanogaster (Fruit fly)).